The primary structure comprises 385 residues: Galactokinase (385 aa).

Residue 34 to 37 participates in substrate binding; that stretch reads EHTD. ATP is bound at residue 124–130; the sequence is SSGLSSS. Mg(2+)-binding residues include Ser130 and Glu162. Catalysis depends on Asp174, which acts as the Proton acceptor. Residue Tyr223 participates in substrate binding.

Belongs to the GHMP kinase family. GalK subfamily.

Its subcellular location is the cytoplasm. The enzyme catalyses alpha-D-galactose + ATP = alpha-D-galactose 1-phosphate + ADP + H(+). It functions in the pathway carbohydrate metabolism; galactose metabolism. In terms of biological role, catalyzes the transfer of the gamma-phosphate of ATP to D-galactose to form alpha-D-galactose-1-phosphate (Gal-1-P). The polypeptide is Galactokinase (Actinobacillus succinogenes (strain ATCC 55618 / DSM 22257 / CCUG 43843 / 130Z)).